A 181-amino-acid polypeptide reads, in one-letter code: Acireductone dioxygenase (181 aa).

Residues His97, His99, Glu103, and His141 each coordinate Fe(2+). 4 residues coordinate Ni(2+): His97, His99, Glu103, and His141.

This sequence belongs to the acireductone dioxygenase (ARD) family. In terms of assembly, monomer. It depends on Fe(2+) as a cofactor. Ni(2+) serves as cofactor.

It carries out the reaction 1,2-dihydroxy-5-(methylsulfanyl)pent-1-en-3-one + O2 = 3-(methylsulfanyl)propanoate + CO + formate + 2 H(+). The catalysed reaction is 1,2-dihydroxy-5-(methylsulfanyl)pent-1-en-3-one + O2 = 4-methylsulfanyl-2-oxobutanoate + formate + 2 H(+). It participates in amino-acid biosynthesis; L-methionine biosynthesis via salvage pathway; L-methionine from S-methyl-5-thio-alpha-D-ribose 1-phosphate: step 5/6. Functionally, catalyzes 2 different reactions between oxygen and the acireductone 1,2-dihydroxy-3-keto-5-methylthiopentene (DHK-MTPene) depending upon the metal bound in the active site. Fe-containing acireductone dioxygenase (Fe-ARD) produces formate and 2-keto-4-methylthiobutyrate (KMTB), the alpha-ketoacid precursor of methionine in the methionine recycle pathway. Ni-containing acireductone dioxygenase (Ni-ARD) produces methylthiopropionate, carbon monoxide and formate, and does not lie on the methionine recycle pathway. The sequence is that of Acireductone dioxygenase from Stutzerimonas stutzeri (strain A1501) (Pseudomonas stutzeri).